A 253-amino-acid chain; its full sequence is Chorismate mutase 2, cytosolic (253 aa).

The 252-residue stretch at 2 to 253 (DAAGGDQLSL…EVEYLLRRLD (252 aa)) folds into the Chorismate mutase domain.

In terms of assembly, homodimer. Interacts with Cmu1 of the fungal pathogen Ustilago maydis.

Its subcellular location is the cytoplasm. It localises to the cytosol. The catalysed reaction is chorismate = prephenate. Its pathway is metabolic intermediate biosynthesis; prephenate biosynthesis; prephenate from chorismate: step 1/1. Its activity is regulated as follows. No allosteric regulation. The protein is Chorismate mutase 2, cytosolic of Zea mays (Maize).